The chain runs to 239 residues: uncharacterized protein (239 aa).

The next 4 helical transmembrane spans lie at 9-29 (LAIY…SQII), 65-85 (IIYL…YLFI), 94-114 (IILI…TFVV), and 167-187 (IYFA…MHWI).

It localises to the cell membrane. This is an uncharacterized protein from Methanocaldococcus jannaschii (strain ATCC 43067 / DSM 2661 / JAL-1 / JCM 10045 / NBRC 100440) (Methanococcus jannaschii).